The sequence spans 264 residues: MKAVVLAVAVLFLTGSQARHFWQRDEPQTSWDRVKDFATMYVDVIQESGKDYVAQLDASTLGKQLNLNLLENWDTLSSAFSKLREQLGHVSQEFWDTFEKDTAWLREEMNKDLEKVKKKVQPFLDSFQEKMQEEVKRYRHKVEPLSLELRDGAHQQLKELQEKLGPLGKDLKDHALVHMDELRSHLRTYTEEMGQILAERLGAIKESTSLAEYQTKASEHLRTFSKKAKPILEDLRQGLLPVAENFKTNIKNTFDQITKHVTTQ.

Positions 1 to 18 (MKAVVLAVAVLFLTGSQA) are cleaved as a signal peptide. 2 consecutive repeat copies span residues 67-88 (LNLL…EQLG) and 89-110 (HVSQ…EEMN). The tract at residues 67-264 (LNLLENWDTL…DQITKHVTTQ (198 aa)) is 10 X approximate tandem repeats. Residue M109 is modified to Methionine sulfoxide. The stretch at 111-121 (KDLEKVKKKVQ) is one 3; half-length repeat. A run of 3 repeats spans residues 122–143 (PFLD…HKVE), 144–165 (PLSL…EKLG), and 166–187 (PLGK…SHLR). Residues 188-207 (TYTEEMGQILAERLGAIKES) form a 7; truncated repeat. M193 is modified (methionine sulfoxide). Repeat unit 8 spans residues 208 to 229 (TSLAEYQTKASEHLRTFSKKAK). One copy of the 9; half-length repeat lies at 230-240 (PILEDLRQGLL). The stretch at 241-264 (PVAENFKTNIKNTFDQITKHVTTQ) is repeat 10.

The protein belongs to the apolipoprotein A1/A4/E family. As to quaternary structure, homodimer. Interacts with APOA1BP and CLU. Component of a sperm activating protein complex (SPAP), consisting of APOA1, an immunoglobulin heavy chain, an immunoglobulin light chain and albumin. Interacts with NDRG1. Interacts with SCGB3A2. Interacts with NAXE and YJEFN3. In terms of processing, glycosylated. Post-translationally, palmitoylated. Phosphorylation sites are present in the extracellular medium.

The protein localises to the secreted. Its function is as follows. Participates in the reverse transport of cholesterol from tissues to the liver for excretion by promoting cholesterol efflux from tissues and by acting as a cofactor for the lecithin cholesterol acyltransferase (LCAT). As part of the SPAP complex, activates spermatozoa motility. The sequence is that of Apolipoprotein A-I (Apoa1) from Fukomys damarensis (Damaraland mole rat).